A 23-amino-acid chain; its full sequence is Large ribosomal subunit protein uL10 (23 aa).

This sequence belongs to the universal ribosomal protein uL10 family. In terms of assembly, part of the ribosomal stalk of the 50S ribosomal subunit. The N-terminus interacts with L11 and the large rRNA to form the base of the stalk. The C-terminus forms an elongated spine to which L12 dimers bind in a sequential fashion forming a multimeric L10(L12)X complex.

Its function is as follows. Forms part of the ribosomal stalk, playing a central role in the interaction of the ribosome with GTP-bound translation factors. The chain is Large ribosomal subunit protein uL10 (rplJ) from Klebsiella pneumoniae.